A 179-amino-acid chain; its full sequence is ATP synthase subunit b (179 aa).

The chain crosses the membrane as a helical span at residues 26-46 (FLEANLFNLAILLGIIIYYAP).

It belongs to the ATPase B chain family. F-type ATPases have 2 components, F(1) - the catalytic core - and F(0) - the membrane proton channel. F(1) has five subunits: alpha(3), beta(3), gamma(1), delta(1), epsilon(1). F(0) has four main subunits: a(1), b(1), b'(1) and c(10-14). The alpha and beta chains form an alternating ring which encloses part of the gamma chain. F(1) is attached to F(0) by a central stalk formed by the gamma and epsilon chains, while a peripheral stalk is formed by the delta, b and b' chains.

The protein localises to the cellular thylakoid membrane. Its function is as follows. F(1)F(0) ATP synthase produces ATP from ADP in the presence of a proton or sodium gradient. F-type ATPases consist of two structural domains, F(1) containing the extramembraneous catalytic core and F(0) containing the membrane proton channel, linked together by a central stalk and a peripheral stalk. During catalysis, ATP synthesis in the catalytic domain of F(1) is coupled via a rotary mechanism of the central stalk subunits to proton translocation. Functionally, component of the F(0) channel, it forms part of the peripheral stalk, linking F(1) to F(0). In Synechocystis sp. (strain ATCC 27184 / PCC 6803 / Kazusa), this protein is ATP synthase subunit b.